A 92-amino-acid polypeptide reads, in one-letter code: Small ribosomal subunit protein uS19 (92 aa).

The tract at residues 73–92 is disordered; it reads EFSPSRTYYGHAADKKAKRR.

Belongs to the universal ribosomal protein uS19 family.

Protein S19 forms a complex with S13 that binds strongly to the 16S ribosomal RNA. The sequence is that of Small ribosomal subunit protein uS19 from Maricaulis maris (strain MCS10) (Caulobacter maris).